The chain runs to 393 residues: Acetylornithine aminotransferase (393 aa).

Residues 102-103 and F136 contribute to the pyridoxal 5'-phosphate site; that span reads GA. R139 is a binding site for N(2)-acetyl-L-ornithine. 219–222 serves as a coordination point for pyridoxal 5'-phosphate; that stretch reads DEVQ. K248 carries the post-translational modification N6-(pyridoxal phosphate)lysine. Residue S274 coordinates N(2)-acetyl-L-ornithine. Residue T275 participates in pyridoxal 5'-phosphate binding.

The protein belongs to the class-III pyridoxal-phosphate-dependent aminotransferase family. ArgD subfamily. In terms of assembly, homodimer. Pyridoxal 5'-phosphate serves as cofactor.

It localises to the cytoplasm. The catalysed reaction is N(2)-acetyl-L-ornithine + 2-oxoglutarate = N-acetyl-L-glutamate 5-semialdehyde + L-glutamate. Its pathway is amino-acid biosynthesis; L-arginine biosynthesis; N(2)-acetyl-L-ornithine from L-glutamate: step 4/4. This chain is Acetylornithine aminotransferase, found in Wolinella succinogenes (strain ATCC 29543 / DSM 1740 / CCUG 13145 / JCM 31913 / LMG 7466 / NCTC 11488 / FDC 602W) (Vibrio succinogenes).